A 156-amino-acid chain; its full sequence is dCTP deaminase (156 aa).

DCTP contacts are provided by residues 79 to 84 (RSTFAR), Asp-95, Gln-124, and Tyr-138.

It belongs to the dCTP deaminase family. Homotrimer.

The catalysed reaction is dCTP + H2O + H(+) = dUTP + NH4(+). It functions in the pathway pyrimidine metabolism; dUMP biosynthesis; dUMP from dCTP (dUTP route): step 1/2. In terms of biological role, catalyzes the deamination of dCTP to dUTP. The sequence is that of dCTP deaminase from Thermococcus sibiricus (strain DSM 12597 / MM 739).